We begin with the raw amino-acid sequence, 373 residues long: Molybdenum import ATP-binding protein ModC (373 aa).

An ABC transporter domain is found at 4–240 (LTPPTIRAAF…PKLPLAIARD (237 aa)). 38–45 (GPSGCGKS) provides a ligand contact to ATP. The Mop domain maps to 299 to 369 (ASSILNAIAA…IKGVALAPGR (71 aa)).

It belongs to the ABC transporter superfamily. Molybdate importer (TC 3.A.1.8) family. In terms of assembly, the complex is composed of two ATP-binding proteins (ModC), two transmembrane proteins (ModB) and a solute-binding protein (ModA).

Its subcellular location is the cell inner membrane. It catalyses the reaction molybdate(out) + ATP + H2O = molybdate(in) + ADP + phosphate + H(+). In terms of biological role, part of the ABC transporter complex ModABC involved in molybdenum import. Responsible for energy coupling to the transport system. In Rhodopseudomonas palustris (strain ATCC BAA-98 / CGA009), this protein is Molybdenum import ATP-binding protein ModC.